The sequence spans 111 residues: uncharacterized protein (111 aa).

Residues 64–86 (VLCWLVLPLYCCNLLNLFFNIFL) traverse the membrane as a helical segment.

The protein resides in the membrane. This is an uncharacterized protein from Saccharomyces cerevisiae (strain ATCC 204508 / S288c) (Baker's yeast).